A 134-amino-acid polypeptide reads, in one-letter code: Small ribosomal subunit protein uS11 (134 aa).

Disordered regions lie at residues 1–22 (MPPKGRQGAAKKVRRKEKKNVA) and 114–134 (SIQDVTPTPHNGCRPPKRRRV). Basic residues predominate over residues 9-22 (AAKKVRRKEKKNVA).

The protein belongs to the universal ribosomal protein uS11 family. In terms of assembly, part of the 30S ribosomal subunit. Interacts with proteins S7 and S18. Binds to IF-3.

In terms of biological role, located on the platform of the 30S subunit, it bridges several disparate RNA helices of the 16S rRNA. Forms part of the Shine-Dalgarno cleft in the 70S ribosome. This Streptomyces coelicolor (strain ATCC BAA-471 / A3(2) / M145) protein is Small ribosomal subunit protein uS11.